The chain runs to 63 residues: Large ribosomal subunit protein uL29 (63 aa).

It belongs to the universal ribosomal protein uL29 family.

This chain is Large ribosomal subunit protein uL29, found in Colwellia psychrerythraea (strain 34H / ATCC BAA-681) (Vibrio psychroerythus).